Consider the following 683-residue polypeptide: Cyclic nucleotide-gated channel alpha-1 (683 aa).

Topologically, residues 1-160 (MKTNIINTWH…PSGNMYYNWL (160 aa)) are cytoplasmic. The interval 34–144 (ACSSFSDNDN…PKEKKEEEKK (111 aa)) is disordered. The segment covering 105-144 (SKADDKKESKKDPEKKKKKEKEKEKKKEEKPKEKKEEEKK) has biased composition (basic and acidic residues). Residues 161–182 (FCITLPVMYNWTMIIARACFDE) form a helical membrane-spanning segment. Residues 183 to 192 (LQSDYLEYWL) are Extracellular-facing. Residues 193–213 (IFDYVSDVVYLADMFVRTRTG) traverse the membrane as a helical segment. Topologically, residues 214-238 (YLEQGLLVKDELKLIEKYKANLQFK) are cytoplasmic. Residues 239 to 257 (LDVLSVIPTDLLYFKFGWN) traverse the membrane as a helical segment. At 258–262 (YPEIR) the chain is on the extracellular side. Residues 263–281 (LNRLLRISRMFEFFQRTET) form a helical membrane-spanning segment. Topologically, residues 282–288 (RTNYPNI) are cytoplasmic. The interval 286-394 (PNIFRISNLV…GNIGSMISNM (109 aa)) is ion conduction pathway. The chain crosses the membrane as a helical span at residues 289 to 312 (FRISNLVMYIVIIIHWNACVYYSI). Over 313 to 335 (SKAIGFGNDTWVYPDVNDPEFGR) the chain is Extracellular. Asn-320 carries N-linked (GlcNAc...) asparagine glycosylation. 2 helical membrane-spanning segments follow: residues 336-370 (LARKYVYSLYWSTLTLTTIGETPPPVLDSEYVFVV) and 371-395 (VDFLIGVLIFATIVGNIGSMISNMN). Residues 353 to 356 (TIGE) are selectivity filter. The tract at residues 396–472 (AARAEFQSRV…DTLKKVRIFA (77 aa)) is C-linker. Topologically, residues 396–683 (AARAEFQSRV…ESEPTESLQG (288 aa)) are cytoplasmic. A cyclic nucleotide-binding domain region spans residues 476-596 (AGLLVELVLK…EEKGRQILMK (121 aa)). Gly-536, Ser-539, Arg-552, and Thr-553 together coordinate 3',5'-cyclic GMP. Residues Arg-552 and Thr-553 each contribute to the 3',5'-cyclic AMP site. Positions 614 to 668 (LEEKVTRMEGSVDLLQTRFARILAEYESMQQKLKQRLTKVEKFLKPLIETEFSAL) form a coiled coil.

It belongs to the cyclic nucleotide-gated cation channel (TC 1.A.1.5) family. CNGA1 subfamily. Forms heterotetrameric channels composed of CNGA1 and CNGB1 subunits with 3:1 stoichiometry. May also form cyclic nucleotide-activated homotetrameric channels, that are efficiently activated by saturating cGMP, but poorly activated by saturating cAMP compared to the heterotetramer with CNGB1. The channel binds Ca(2+)-bound CALM1 via CaM1 and CaM2 regions of the CNGB1 subunit; this interaction modulates the affinity of the channel for cNMPs in response to intracellular Ca(2+) levels. In terms of tissue distribution, rod cells in the retina.

It is found in the cell membrane. It catalyses the reaction Ca(2+)(in) = Ca(2+)(out). The catalysed reaction is Na(+)(in) = Na(+)(out). It carries out the reaction K(+)(in) = K(+)(out). The enzyme catalyses NH4(+)(in) = NH4(+)(out). It catalyses the reaction Rb(+)(in) = Rb(+)(out). The catalysed reaction is Li(+)(in) = Li(+)(out). It carries out the reaction Cs(+)(in) = Cs(+)(out). Its function is as follows. Pore-forming subunit of the rod cyclic nucleotide-gated channel. Mediates rod photoresponses at dim light converting transient changes in intracellular cGMP levels into electrical signals. In the dark, cGMP levels are high and keep the channel open enabling a steady inward current carried by Na(+) and Ca(2+) ions that leads to membrane depolarization and neurotransmitter release from synaptic terminals. Upon photon absorption cGMP levels decline leading to channel closure and membrane hyperpolarization that ultimately slows neurotransmitter release and signals the presence of light, the end point of the phototransduction cascade. Conducts cGMP- and cAMP-gated ion currents, with permeability for monovalent and divalent cations. The selectivity for Ca(2+) over Na(+) increases with cGMP concentrations, whereas the selectivity among monovalent ions is independent of the cGMP levels. This Rattus norvegicus (Rat) protein is Cyclic nucleotide-gated channel alpha-1.